A 766-amino-acid polypeptide reads, in one-letter code: Phospholipid phosphatase-related protein type 4 (766 aa).

S37 bears the Phosphoserine mark. Helical transmembrane passes span 68 to 88 (LPCFYFVELPILASSVVSLYF), 120 to 140 (AIPFLMLLSLAFAGPAITIMV), and 179 to 199 (FVGVHVFGLCSTALITDIIQL). N-linked (GlcNAc...) asparagine glycans are attached at residues N215 and N220. Residues 248-268 (SFPSQHATLAAFAAVYVSMYF) traverse the membrane as a helical segment. A glycan (N-linked (GlcNAc...) asparagine) is linked at N269. 2 helical membrane passes run 277–297 (KLLKPLLVFTFIICGIICGLT) and 309–329 (VYCGFLIGGGIALYLGLYAVG). Position 347 is a phosphoserine (S347). N363 is a glycosylation site (N-linked (GlcNAc...) asparagine). The residue at position 386 (S386) is a Phosphoserine. A glycan (N-linked (GlcNAc...) asparagine) is linked at N433. Phosphoserine is present on S439. The disordered stretch occupies residues 454 to 494 (SKNESRKMSLQVMDTEPEGQSPPRSIEMRSSSEPSRVGVNG). A glycan (N-linked (GlcNAc...) asparagine) is linked at N456. Phosphoserine is present on residues S462 and S474. 3 N-linked (GlcNAc...) asparagine glycosylation sites follow: N515, N545, and N570. Position 608 is a phosphoserine (S608). 3 disordered regions span residues 634-654 (PIIQIPSSTEGEGSGSWKWKA), 672-701 (DSESCESLKDSFGSGDRKRSNIDSNEHHHH), and 742-766 (ERSNSPENTRNIFYKGTSPTRAYKD). The span at 672-697 (DSESCESLKDSFGSGDRKRSNIDSNE) shows a compositional bias: basic and acidic residues. Positions 743-752 (RSNSPENTRN) are enriched in polar residues.

Belongs to the PA-phosphatase related phosphoesterase family. Post-translationally, O-glycosylated. Probably at Ser-347. Brain-specific, it is exclusively expressed in neurons (at protein level).

The protein resides in the postsynaptic density membrane. Postsynaptic density membrane protein that indirectly regulates glutamatergic synaptic transmission through lysophosphatidic acid (LPA)-mediated signaling pathways. Binds lysophosphatidic acid (LPA) and mediates its internalization into cells. Could act as receptor or a transporter of this lipid at the post-synaptic membrane. Modulates lysophosphatidic acid (LPA) activity in neuron axonal outgrowth during development by attenuating phospholipid-induced axon collapse. This Mus musculus (Mouse) protein is Phospholipid phosphatase-related protein type 4.